We begin with the raw amino-acid sequence, 60 residues long: Bacteriochlorophyll c-binding protein (60 aa).

Met-1 carries the post-translational modification N-formylmethionine. His-25 serves as a coordination point for a bacteriochlorophyll c.

The protein belongs to the BChl C/E-binding protein family.

The protein localises to the chlorosome. The protein resides in the chlorosome envelope. In terms of biological role, component of the photosynthetic apparatus. The light harvesting B740 complex binds bacteriochlorophyll c. The chain is Bacteriochlorophyll c-binding protein (csmA) from Pelodictyon luteolum.